The primary structure comprises 98 residues: Citrate lyase acyl carrier protein (98 aa).

Ser-14 bears the O-(phosphoribosyl dephospho-coenzyme A)serine mark.

The protein belongs to the CitD family. As to quaternary structure, oligomer with a subunit composition of (alpha,beta,gamma)6.

The protein resides in the cytoplasm. Functionally, covalent carrier of the coenzyme of citrate lyase. This Vibrio cholerae serotype O1 (strain ATCC 39315 / El Tor Inaba N16961) protein is Citrate lyase acyl carrier protein.